Consider the following 444-residue polypeptide: Methylenetetrahydrofolate--tRNA-(uracil-5-)-methyltransferase TrmFO (444 aa).

Residue 10–15 (GAGLAG) participates in FAD binding.

The protein belongs to the MnmG family. TrmFO subfamily. The cofactor is FAD.

It localises to the cytoplasm. It catalyses the reaction uridine(54) in tRNA + (6R)-5,10-methylene-5,6,7,8-tetrahydrofolate + NADH + H(+) = 5-methyluridine(54) in tRNA + (6S)-5,6,7,8-tetrahydrofolate + NAD(+). The catalysed reaction is uridine(54) in tRNA + (6R)-5,10-methylene-5,6,7,8-tetrahydrofolate + NADPH + H(+) = 5-methyluridine(54) in tRNA + (6S)-5,6,7,8-tetrahydrofolate + NADP(+). Functionally, catalyzes the folate-dependent formation of 5-methyl-uridine at position 54 (M-5-U54) in all tRNAs. This chain is Methylenetetrahydrofolate--tRNA-(uracil-5-)-methyltransferase TrmFO, found in Streptococcus pneumoniae (strain 70585).